The primary structure comprises 525 residues: MQRVMPASWSSGGSLLPFRVSTTTKVVLFSLTAGVALMSVLSRFLRRRKPPRPPRRARKYTGRRNRNSMRSPNDLISIAGSKASARSGSPVGSTLAYSDRLSMASGSIGVGVLGVQNAGPGSSVVTQLTAQQLGMMGMEALDTVINFWEDALAAHYSPGGLPALLTTAEDSEFCREIQNLLEMAYTLQEQSELLFLDQRSVLFREEHSIDEAEEEAGEADDDRRSRKSGSVLSRAGSDPNFDSAESFASALDQVADLREFDGFIETSYEEYPLFQSALKHHDEYTVPCRTIRAELMHCSTDTEYLAKLHCVRLAFQFLFKDPAVGQWICDAGRQILTDLLCLGDKDTKEFLVGYEDMVNYLHDSNNWPCIQMELEQRNVKAMTFYDICLDFIILDSFKDLDAPPASVTAVVQNRWLSNGFKETALTTAVWSVLKAKKRMLKFPNGFMSHFYVISEQISPLMAWGFFGPNENLRDICHYFREELLAFLGDIFSFQKSRFTTIEEFSQDVLQHMQTRVNNIGVKFSQ.

The helical transmembrane segment at 26–45 (VVLFSLTAGVALMSVLSRFL) threads the bilayer. Residues 47–67 (RRKPPRPPRRARKYTGRRNRN) are compositionally biased toward basic residues. 2 disordered regions span residues 47–73 (RRKP…RSPN) and 210–239 (DEAE…GSDP). Residues 211 to 220 (EAEEEAGEAD) are compositionally biased toward acidic residues.

Belongs to the mitoguardin family. Interacts with zuc.

It is found in the mitochondrion outer membrane. Its function is as follows. Regulator of mitochondrial fusion required to maintain neuronal homeostasis. This chain is Mitoguardin, found in Drosophila melanogaster (Fruit fly).